The following is a 337-amino-acid chain: Inositol 2-dehydrogenase (337 aa).

This sequence belongs to the Gfo/Idh/MocA family. Homotetramer.

The enzyme catalyses myo-inositol + NAD(+) = scyllo-inosose + NADH + H(+). In terms of biological role, involved in the oxidation of myo-inositol (MI) to 2-keto-myo-inositol (2KMI or 2-inosose). The sequence is that of Inositol 2-dehydrogenase from Serratia proteamaculans (strain 568).